Consider the following 44-residue polypeptide: Conotoxin Fi11.11 (44 aa).

Cystine bridges form between C1/C15, C8/C20, C14/C24, and C19/C28. Asparagine amide is present on N30. The propeptide occupies 35–44 (QVPLKSFGQR).

It belongs to the conotoxin I2 superfamily. As to expression, expressed by the venom duct.

Its subcellular location is the secreted. The polypeptide is Conotoxin Fi11.11 (Conus figulinus (Fig cone)).